A 606-amino-acid chain; its full sequence is CDPK-related kinase 8 (606 aa).

The span at 1-14 (MGGCTSKPSTSSGR) shows a compositional bias: polar residues. The interval 1 to 132 (MGGCTSKPST…TEVPQREEEE (132 aa)) is disordered. The N-myristoyl glycine moiety is linked to residue G2. Residues 98–110 (KHIRAALRRRKGK) show a composition bias toward basic residues. One can recognise a Protein kinase domain in the interval 150 to 412 (VELGEEIGRG…ASQALMHPWI (263 aa)). ATP contacts are provided by residues 156-164 (IGRGHFGYT) and K182. The Proton acceptor role is filled by D278. S318 bears the Phosphoserine mark. Positions 418–448 (DMNIPFDILIFRQMKAYLRSSSLRKAALRAL) are autoinhibitory domain. Residues 437-457 (SSSLRKAALRALSKTLIKDEI) form a calmodulin binding (CaMBD) region. EF-hand domains lie at 455-491 (DEIL…ATEA), 492-527 (MKES…VHQH), 528-567 (ESLD…GPSI), and 570-599 (HSVL…VSVR). 9 residues coordinate Ca(2+): N470, D472, E516, D545, N547, N549, E556, D581, and K583. S585 is modified (phosphoserine).

It belongs to the protein kinase superfamily. Ser/Thr protein kinase family. CDPK subfamily. As to quaternary structure, binds calmodulin (CaM) in a calcium-dependent manner. Post-translationally, autophosphorylated.

The protein resides in the membrane. It carries out the reaction L-seryl-[protein] + ATP = O-phospho-L-seryl-[protein] + ADP + H(+). The catalysed reaction is L-threonyl-[protein] + ATP = O-phospho-L-threonyl-[protein] + ADP + H(+). With respect to regulation, activated by calcium and calmodulin. Autophosphorylation may play an important role in the regulation of the kinase activity. Its function is as follows. May play a role in signal transduction pathways that involve calcium as a second messenger. This is CDPK-related kinase 8 (CRK8) from Arabidopsis thaliana (Mouse-ear cress).